A 755-amino-acid chain; its full sequence is Diamine oxidase [copper-containing] (755 aa).

The first 24 residues, 1-24, serve as a signal peptide directing secretion; sequence MGRGTLALGWAGAALLLLQMLAAA. Asparagine 115 carries an N-linked (GlcNAc...) asparagine glycan. A disulfide bond links cysteine 182 and cysteine 186. The active-site Proton acceptor is aspartate 376. A disulfide bond links cysteine 394 and cysteine 420. Residue tyrosine 464 is the Schiff-base intermediate with substrate; via topaquinone of the active site. The residue at position 464 (tyrosine 464) is a 2',4',5'-topaquinone. Residues histidine 513 and histidine 515 each coordinate Cu(2+). Ca(2+)-binding residues include aspartate 522, leucine 523, and aspartate 524. Asparagine 541 is a glycosylation site (N-linked (GlcNAc...) asparagine). Glutamate 565, phenylalanine 656, asparagine 659, glutamate 661, aspartate 667, and leucine 668 together coordinate Ca(2+). Histidine 678 is a Cu(2+) binding site. Residue asparagine 749 is glycosylated (N-linked (GlcNAc...) asparagine).

This sequence belongs to the copper/topaquinone oxidase family. In terms of assembly, homodimer; disulfide-linked. It depends on Cu(2+) as a cofactor. Ca(2+) is required as a cofactor. Requires L-topaquinone as cofactor. Post-translationally, topaquinone (TPQ) is generated by copper-dependent autoxidation of a specific tyrosyl residue. In terms of processing, N-glycosylated; the glycans are primarily linear, di-, or tribranched fucosylated complex type.

It is found in the secreted. Its subcellular location is the extracellular space. The protein resides in the cell membrane. It catalyses the reaction histamine + O2 + H2O = imidazole-4-acetaldehyde + H2O2 + NH4(+). The catalysed reaction is N(tau)-methylhistamine + O2 + H2O = 1-methylimidazole-4-acetaldehyde + H2O2 + NH4(+). The enzyme catalyses putrescine + O2 + H2O = 4-aminobutanal + H2O2 + NH4(+). It carries out the reaction cadaverine + O2 + H2O = 5-aminopentanal + H2O2 + NH4(+). Inhibited by amiloride and amiloride analogs. In terms of biological role, catalyzes the oxidative deamination of primary amines to the corresponding aldehydes with the concomitant production of hydrogen peroxide and ammonia. Its preferred substrates in vitro are the diamines histamine and 1-methylhistamine and it could therefore play a role in allergic and immune responses. Has a broad specificity for diamines and can also act on cadaverine and putrescine, two products of amino acid catabolism. It could also act on polyamines, like spermidine and spermine though less efficiently, and regulate various biological processes. This is Diamine oxidase [copper-containing] from Sus scrofa (Pig).